The chain runs to 454 residues: Phosphoglucosamine mutase (454 aa).

The Phosphoserine intermediate role is filled by Ser104. Mg(2+) contacts are provided by Ser104, Asp241, Asp243, and Asp245. Phosphoserine is present on Ser104.

It belongs to the phosphohexose mutase family. Mg(2+) is required as a cofactor. Activated by phosphorylation.

It catalyses the reaction alpha-D-glucosamine 1-phosphate = D-glucosamine 6-phosphate. Functionally, catalyzes the conversion of glucosamine-6-phosphate to glucosamine-1-phosphate. This Paenarthrobacter aurescens (strain TC1) protein is Phosphoglucosamine mutase.